We begin with the raw amino-acid sequence, 365 residues long: MVPFMRILGIETSCDETAAAVVERNAEGHCNVLSDVVLSQLDEHSAYGGVVPEIAARAHVEALDELIEQALKRANVSLADVDAIAATSGPGLIGGLLVGLMTGKAIARAAGKPLYAINHLEGHALTARLTHGLSFPYLVLLVSGGHTQLILVRGVGQYERWGTTIDDALGEAFDKTAKLLGLPYPGGPAVERMARDGNADRFDFPRPLVGEARLDFSFSGLKTAVRQAAQDIAPLSDQDVADICASFQRAISRTLKDRIGRGLQRFKREFPATGEKPALVVAGGVAANLELRATLQALCDKNGFRFIAPPLSLCTDNAVMIAWAGLERMATGVAPDTLDVQPRSRWPLDANAETLIGFGKRGAKA.

Fe cation contacts are provided by histidine 119 and histidine 123. Substrate-binding positions include 141 to 145 (LVSGG), aspartate 174, glycine 187, and asparagine 288. Aspartate 316 contributes to the Fe cation binding site.

The protein belongs to the KAE1 / TsaD family. Fe(2+) serves as cofactor.

The protein resides in the cytoplasm. The catalysed reaction is L-threonylcarbamoyladenylate + adenosine(37) in tRNA = N(6)-L-threonylcarbamoyladenosine(37) in tRNA + AMP + H(+). Required for the formation of a threonylcarbamoyl group on adenosine at position 37 (t(6)A37) in tRNAs that read codons beginning with adenine. Is involved in the transfer of the threonylcarbamoyl moiety of threonylcarbamoyl-AMP (TC-AMP) to the N6 group of A37, together with TsaE and TsaB. TsaD likely plays a direct catalytic role in this reaction. The polypeptide is tRNA N6-adenosine threonylcarbamoyltransferase (Rhizobium etli (strain ATCC 51251 / DSM 11541 / JCM 21823 / NBRC 15573 / CFN 42)).